Here is a 214-residue protein sequence, read N- to C-terminus: Probable GTP-binding protein EngB (214 aa).

The 176-residue stretch at 24-199 folds into the EngB-type G domain; that stretch reads GGYEVAFAGR…RGIVGGWLGL (176 aa). Residues 32–39, 59–63, 77–80, 144–147, and 178–180 contribute to the GTP site; these read GRSNAGKS, GRTQQ, DLPG, TKAD, and YSG. Positions 39 and 61 each coordinate Mg(2+).

Belongs to the TRAFAC class TrmE-Era-EngA-EngB-Septin-like GTPase superfamily. EngB GTPase family. Requires Mg(2+) as cofactor.

In terms of biological role, necessary for normal cell division and for the maintenance of normal septation. The polypeptide is Probable GTP-binding protein EngB (Xanthomonas axonopodis pv. citri (strain 306)).